We begin with the raw amino-acid sequence, 124 residues long: Fluoride-specific ion channel FluC (124 aa).

4 consecutive transmembrane segments (helical) span residues 4 to 24 (VLYI…ISIL), 35 to 55 (FGTL…YALA), 60 to 80 (IGPE…TTFS), and 100 to 120 (LNVL…QQLI). Residues Gly74 and Thr77 each coordinate Na(+).

It belongs to the fluoride channel Fluc/FEX (TC 1.A.43) family.

It is found in the cell inner membrane. The catalysed reaction is fluoride(in) = fluoride(out). With respect to regulation, na(+) is not transported, but it plays an essential structural role and its presence is essential for fluoride channel function. Functionally, fluoride-specific ion channel. Important for reducing fluoride concentration in the cell, thus reducing its toxicity. This is Fluoride-specific ion channel FluC from Shewanella amazonensis (strain ATCC BAA-1098 / SB2B).